Reading from the N-terminus, the 173-residue chain is Thiol-disulfide oxidoreductase ResA (173 aa).

Residues 10-29 (VIILLILSGAVGFTLYQGYF) traverse the membrane as a helical; Signal-anchor for type II membrane protein segment. Positions 35–173 (MEIGKEAPNF…LEEYLKKITP (139 aa)) constitute a Thioredoxin domain. An intrachain disulfide couples C73 to C76.

Belongs to the thioredoxin family. ResA subfamily.

Its subcellular location is the cell membrane. It participates in protein modification; cytochrome c assembly. Its function is as follows. Thiol-disulfide oxidoreductase which is required in disulfide reduction during c-type cytochrome synthesis. May accept reducing equivalents from CcdA, leading to breakage of disulfide bonds in apocytochrome c; following this reduction heme can be covalently attached. This chain is Thiol-disulfide oxidoreductase ResA, found in Bacillus cereus (strain ATCC 10987 / NRS 248).